We begin with the raw amino-acid sequence, 184 residues long: ATP synthase subunit b, chloroplastic (184 aa).

Residues 27 to 49 (LATNPINLSVVFGVLIFFGKGVL) traverse the membrane as a helical segment.

This sequence belongs to the ATPase B chain family. In terms of assembly, F-type ATPases have 2 components, F(1) - the catalytic core - and F(0) - the membrane proton channel. F(1) has five subunits: alpha(3), beta(3), gamma(1), delta(1), epsilon(1). F(0) has four main subunits: a(1), b(1), b'(1) and c(10-14). The alpha and beta chains form an alternating ring which encloses part of the gamma chain. F(1) is attached to F(0) by a central stalk formed by the gamma and epsilon chains, while a peripheral stalk is formed by the delta, b and b' chains.

The protein localises to the plastid. Its subcellular location is the chloroplast thylakoid membrane. Its function is as follows. F(1)F(0) ATP synthase produces ATP from ADP in the presence of a proton or sodium gradient. F-type ATPases consist of two structural domains, F(1) containing the extramembraneous catalytic core and F(0) containing the membrane proton channel, linked together by a central stalk and a peripheral stalk. During catalysis, ATP synthesis in the catalytic domain of F(1) is coupled via a rotary mechanism of the central stalk subunits to proton translocation. Component of the F(0) channel, it forms part of the peripheral stalk, linking F(1) to F(0). This is ATP synthase subunit b, chloroplastic from Arabis hirsuta (Hairy rock-cress).